The primary structure comprises 515 residues: Serine--tRNA ligase, cytoplasmic (515 aa).

The interaction with tRNA stretch occupies residues 9–61 (RTDKGGDPEIIRETQRKRFKDVSLVDKLVQADTEWRKCRFTADNLNKAKNLCS). Thr-271 and Arg-302 together coordinate L-serine. ATP is bound by residues 302 to 304 (RQE) and 318 to 321 (VHQF). Residue Glu-325 participates in L-serine binding. Position 391–394 (391–394 (ELVS)) interacts with ATP. Asn-427 is a binding site for L-serine. Residues 475–515 (PIDQETTKKQKKQQEGGKKKKHQGGDADLENKVENMSVNDS) are disordered. Residues 479–507 (ETTKKQKKQQEGGKKKKHQGGDADLENKV) show a composition bias toward basic and acidic residues. Residues 482 to 494 (KKQKKQQEGGKKK) carry the Nuclear localization signal motif.

This sequence belongs to the class-II aminoacyl-tRNA synthetase family. Type-1 seryl-tRNA synthetase subfamily.

The protein localises to the cytoplasm. It localises to the nucleus. It carries out the reaction tRNA(Ser) + L-serine + ATP = L-seryl-tRNA(Ser) + AMP + diphosphate + H(+). The enzyme catalyses tRNA(Sec) + L-serine + ATP = L-seryl-tRNA(Sec) + AMP + diphosphate + H(+). Functionally, catalyzes the attachment of serine to tRNA(Ser) in a two-step reaction: serine is first activated by ATP to form Ser-AMP and then transferred to the acceptor end of tRNA(Ser). Is probably also able to aminoacylate tRNA(Sec) with serine, to form the misacylated tRNA L-seryl-tRNA(Sec), which will be further converted into selenocysteinyl-tRNA(Sec). In the nucleus, binds to the vegfa core promoter and prevents myc binding and transcriptional activation by myc. Thereby inhibits the production of vegfa and sprouting angiogenesis mediated by vegfa. In Danio rerio (Zebrafish), this protein is Serine--tRNA ligase, cytoplasmic (sars1).